The following is a 101-amino-acid chain: Ubiquitin-related modifier 1 homolog (101 aa).

At G101 the chain carries 1-thioglycine. G101 participates in a covalent cross-link: Glycyl lysine isopeptide (Gly-Lys) (interchain with K-? in acceptor proteins).

The protein belongs to the URM1 family. In terms of assembly, interacts with cer. In terms of processing, C-terminal thiocarboxylation occurs in 2 steps, it is first acyl-adenylated (-COAMP) via the hesA/moeB/thiF part of the MOCS3 homolog, then thiocarboxylated (-COSH) via the rhodanese domain of the MOCS3 homolog.

Its subcellular location is the cytoplasm. It functions in the pathway tRNA modification; 5-methoxycarbonylmethyl-2-thiouridine-tRNA biosynthesis. Acts as a sulfur carrier required for 2-thiolation of mcm(5)S(2)U at tRNA wobble positions of cytosolic tRNA(Lys), tRNA(Glu) and tRNA(Gln). Serves as sulfur donor in tRNA 2-thiolation reaction by being thiocarboxylated (-COSH) at its C-terminus by MOCS3. The sulfur is then transferred to tRNA to form 2-thiolation of mcm(5)S(2)U. Also acts as a ubiquitin-like protein (UBL) that is covalently conjugated via an isopeptide bond to lysine residues of target proteins such as Prx2/Jafrac1, Ciao1, Eip71CD and GILT1. The thiocarboxylated form serves as substrate for conjugation and oxidative stress specifically induces the formation of UBL-protein conjugates. The sequence is that of Ubiquitin-related modifier 1 homolog from Drosophila erecta (Fruit fly).